Consider the following 87-residue polypeptide: Small ribosomal subunit protein bS18 (87 aa).

The protein belongs to the bacterial ribosomal protein bS18 family. Part of the 30S ribosomal subunit. Forms a tight heterodimer with protein bS6.

Binds as a heterodimer with protein bS6 to the central domain of the 16S rRNA, where it helps stabilize the platform of the 30S subunit. The polypeptide is Small ribosomal subunit protein bS18 (Sulfurimonas denitrificans (strain ATCC 33889 / DSM 1251) (Thiomicrospira denitrificans (strain ATCC 33889 / DSM 1251))).